We begin with the raw amino-acid sequence, 60 residues long: MNRFRVATDQLDLYKASLMNRAFSSNQNSRNNGKYFLQQLTQFQSTEIKGEGSVIRNLDN.

This is an uncharacterized protein from Dictyostelium discoideum (Social amoeba).